The sequence spans 688 residues: G-protein coupled receptor-associated protein LMBRD2 (688 aa).

The Extracellular segment spans residues 1–3 (MSG). Residues 4 to 21 (AALGLEIVFVFFLALFLL) traverse the membrane as a helical segment. At 22–32 (HRYGDFKKQHR) the chain is on the cytoplasmic side. A helical membrane pass occupies residues 33-53 (LVIIATLLAWYLCFLIVFILP). Residues 54 to 99 (LDVSTTIYNRCKLAVNSSPAESNSSFVTLAPSKQQCFKPWSYIPNG) are Extracellular-facing. An N-linked (GlcNAc...) asparagine glycan is attached at Asn76. The chain crosses the membrane as a helical span at residues 100-120 (IMPIFWRVVYWTSQFLTWILL). Residues 121 to 144 (PFMQSYARSGGFSITGKIKTALIE) are Cytoplasmic-facing. The chain crosses the membrane as a helical span at residues 145-165 (NAIYYGTYLLIFGAFLIYVAV). Residues 166-180 (NPKFNLQWNQLQTIG) lie on the Extracellular side of the membrane. A helical transmembrane segment spans residues 181–201 (IAAANTWGLFLLVLLLGYGLV). Residues 202–381 (EIPRSHWNGA…ECLLRPWFYR (180 aa)) are Cytoplasmic-facing. A coiled-coil region spans residues 222-254 (FKAAKLMTEKADAEENLEDIMEEVRKVSESIKY). The chain crosses the membrane as a helical span at residues 382–402 (VLAVVLAAFSVIVVWSECTFF). Topologically, residues 403-426 (STRPVLSLVAVFIQLAEKTYNYIY) are extracellular. A helical transmembrane segment spans residues 427–447 (IEMACFLTIFFLSICVYSTVF). The Cytoplasmic segment spans residues 448-467 (RIRVFNYYYLASHHQTDAYS). The helical transmembrane segment at 468-488 (LLFSGMLFCRLTPPLCLNFLG) threads the bilayer. Residues 489–515 (LTHMDATISHTDAQPTAYTSIMGSMKV) lie on the Extracellular side of the membrane. Residues 516-536 (LSFIADGFYIYYPMLVVILCI) form a helical membrane-spanning segment. At 537-688 (ATYFSLGTRC…MSRSRIFEDV (152 aa)) the chain is on the cytoplasmic side. Residues 600-617 (REDSTRNRVVHTEQKESS) show a composition bias toward basic and acidic residues. Residues 600 to 673 (REDSTRNRVV…ESDSGRYQPG (74 aa)) form a disordered region. Positions 618-634 (FSETNTNRPLSKYTRTN) are enriched in polar residues. Residues 635 to 644 (GRTERDRIEL) show a composition bias toward basic and acidic residues.

The protein belongs to the LIMR family.

It localises to the cell membrane. In terms of biological role, may associate with G-protein coupled receptors and regulate downstream signaling pathways. In Gallus gallus (Chicken), this protein is G-protein coupled receptor-associated protein LMBRD2.